The chain runs to 296 residues: Probable cell wall protein PGA41 (296 aa).

The N-terminal stretch at 1-18 (MKFTIVLFTLISVTVAAA) is a signal peptide. Over residues 146–212 (IASSTKESSS…ITTISSDSST (67 aa)) the composition is skewed to low complexity. Residues 146–276 (IASSTKESSS…PNSSQTAPGA (131 aa)) form a disordered region. Residues 220 to 245 (QGGGGNSGNNGSNGDGGNDASGGGGV) show a composition bias toward gly residues. 2 N-linked (GlcNAc...) asparagine glycosylation sites follow: Asn229 and Asn268. Residues 247–274 (NENEQASSPPSSQSSTNSNQPNSSQTAP) show a composition bias toward low complexity. Residue Gly275 is the site of GPI-anchor amidated glycine attachment. The propeptide at 276-296 (AANYLSSVSVGTLMILVLGLI) is removed in mature form.

Belongs to the IHD1 family. The GPI-anchor is attached to the protein in the endoplasmic reticulum and serves to target the protein to the cell surface. There, the glucosamine-inositol phospholipid moiety is cleaved off and the GPI-modified mannoprotein is covalently attached via its lipidless GPI glycan remnant to the 1,6-beta-glucan of the outer cell wall layer.

It localises to the secreted. The protein resides in the cell wall. Its subcellular location is the membrane. Probable GPI-anchored cell wall protein that may be involved in cell wall organization, hyphal growth, as well as in virulence. The sequence is that of Probable cell wall protein PGA41 (PGA41) from Candida albicans (strain SC5314 / ATCC MYA-2876) (Yeast).